An 835-amino-acid chain; its full sequence is Toll-like receptor 4 (835 aa).

An N-terminal signal peptide occupies residues 1–25; that stretch reads MMPLLHLAGTLIMALFLSCLRPGSL. Residues 26–638 are Extracellular-facing; sequence NPCIEVLPNI…KTIISVSVVS (613 aa). A disulfide bridge connects residues Cys-28 and Cys-39. N-linked (GlcNAc...) asparagine glycosylation is found at Asn-34, Asn-43, and Asn-75. LRR repeat units lie at residues 54 to 75, 78 to 99, 102 to 123, 126 to 147, and 150 to 171; these read STKNLDLSFNPLKILRSYSFTN, QLQWLDLSRCEIETIEDKAWHG, QLSTLVLTGNPIKSFSPGSFSG, NLENLVAVETKMTSLEGFHIGQ, and SLKKLNVAHNLIHSFKLPEYFS. Residue Asn-172 is glycosylated (N-linked (GlcNAc...) asparagine). 3 LRR repeats span residues 175 to 198, 204 to 224, and 226 to 247; these read NLEHVDLSYNYIQTISVKDLQFLR, NLSLDLSLNPIDSIQAQAFQG, and RLHELTLRSNFNSSNVLKMCLQ. Asn-204, Asn-237, Asn-248, Asn-281, and Asn-307 each carry an N-linked (GlcNAc...) asparagine glycan. Cys-280 and Cys-304 are joined by a disulfide. The LRR 9 repeat unit spans residues 372–381; sequence SLRYLDLSRN. Cys-388 and Cys-389 are disulfide-bonded. LRR repeat units lie at residues 398-420, 421-442, 446-467, and 470-491; these read NLKYLDLSFNGVILMSANFMGLE, ELEYLDFQHSTLKKVTEFSVFL, KLLYLDISYTNTKIDFDGIFLG, and SLNTLKMAGNSFKDNTLSNVFT. N-linked (GlcNAc...) asparagine glycans are attached at residues Asn-492, Asn-495, and Asn-524. 3 LRR repeats span residues 495-516, 519-540, and 543-564; these read NLTFLDLSKCQLEQISRGVFDT, RLQLLNMSHNNLLFLDPSHYKQ, and SLRTLDCSFNRIETSKGILQHF. 2 N-linked (GlcNAc...) asparagine glycosylation sites follow: Asn-572 and Asn-575. Positions 576 to 627 constitute an LRRCT domain; sequence NSVACICEYQNFLQWVKDQKMFLVNVEQMKCASPIDMKASLVLDFTNSTCYI. 2 cysteine pairs are disulfide-bonded: Cys-580/Cys-606 and Cys-582/Cys-625. Residue Asn-622 is glycosylated (N-linked (GlcNAc...) asparagine). The helical transmembrane segment at 639 to 659 threads the bilayer; sequence VLVVATVAFLIYHFYFHLILI. At 660-835 the chain is on the cytoplasmic side; sequence AGCKKYSRGE…EEEQEATTLT (176 aa). Positions 670 to 813 constitute a TIR domain; sequence SIYDAFVIYS…IFWRRLKKAL (144 aa).

It belongs to the Toll-like receptor family. Belongs to the lipopolysaccharide (LPS) receptor, a multi-protein complex containing at least CD14, LY96 and TLR4. Binding to bacterial LPS leads to homodimerization. Interacts with LY96 via the extracellular domain. Interacts with MYD88 and TIRAP via their respective TIR domains. Interacts with TICAM2. Interacts with NOX4. Interacts with CNPY3 and HSP90B1; this interaction is required for proper folding in the endoplasmic reticulum. Interacts with MAP3K21; this interaction leads to negative regulation of TLR4 signaling. Interacts with CD36, following CD36 stimulation by oxLDL or amyloid-beta 42, and forms a heterodimer with TLR6. The trimeric complex is internalized and triggers inflammatory response. LYN kinase activity facilitates TLR4-TLR6 heterodimerization and signal initiation. Interacts with TICAM1 in response to LPS in a WDFY1-dependent manner. Interacts with WDFY1 in response to LPS. Interacts with SMPDL3B. Interacts with CEACAM1; upon lipopolysaccharide stimulation, forms a complex including TLR4 and the phosphorylated form of SYK and CEACAM1, which in turn, recruits PTPN6 that dephosphorylates SYK, reducing the production of reactive oxygen species (ROS) and lysosome disruption, which in turn, reduces the activity of the inflammasome. Interacts with RFTN1; the interaction occurs in response to lipopolysaccharide stimulation. Interacts with SCIMP; the interaction occurs in response to lipopolysaccharide stimulation and is enhanced by phosphorylation of SCIMP by LYN. This interaction facilitates the phosphorylation of TLR4 by LYN which elicits a selective cytokine response in macrophages. Interacts with TRAF3IP3. Interacts with TREM1; this interaction enhances TLR4-mediated inflammatory response. Interacts with ZG16B/PAUF. Interacts with CD82; this interaction inhibits TLR4-mediated signaling pathway. In terms of processing, phosphorylated on tyrosine residues by LYN after binding lipopolysaccharide. Ubiquitinated by RNF128 via 'Lys-28'-linked polyubiquitin chains, leading to proteasomal degradation.

The protein resides in the cell membrane. Its subcellular location is the early endosome. It localises to the cell projection. The protein localises to the ruffle. Functionally, transmembrane receptor that functions as a pattern recognition receptor recognizing pathogen- and damage-associated molecular patterns (PAMPs and DAMPs) to induce innate immune responses via downstream signaling pathways. At the plasma membrane, cooperates with LY96 to mediate the innate immune response to bacterial lipopolysaccharide (LPS). Also involved in LPS-independent inflammatory responses triggered by free fatty acids, such as palmitate, and Ni(2+). Mechanistically, acts via MYD88, TIRAP and TRAF6, leading to NF-kappa-B activation, cytokine secretion and the inflammatory response. Alternatively, CD14-mediated TLR4 internalization via endocytosis is associated with the initiation of a MYD88-independent signaling via the TICAM1-TBK1-IRF3 axis leading to type I interferon production. In addition to the secretion of proinflammatory cytokines, initiates the activation of NLRP3 inflammasome and formation of a positive feedback loop between autophagy and NF-kappa-B signaling cascade. In complex with TLR6, promotes inflammation in monocytes/macrophages by associating with TLR6 and the receptor CD86. Upon ligand binding, such as oxLDL or amyloid-beta 42, the TLR4:TLR6 complex is internalized and triggers inflammatory response, leading to NF-kappa-B-dependent production of CXCL1, CXCL2 and CCL9 cytokines, via MYD88 signaling pathway, and CCL5 cytokine, via TICAM1 signaling pathway. In myeloid dendritic cells, vesicular stomatitis virus glycoprotein G but not LPS promotes the activation of IRF7, leading to type I IFN production in a CD14-dependent manner. This chain is Toll-like receptor 4 (Tlr4), found in Rattus norvegicus (Rat).